Reading from the N-terminus, the 243-residue chain is MYEVKLDAFNGPLDLLLHLIQKYEIDIYDIPMKALTEQYMQYVHAMNQLEINVASEYLVMASELLMIKSKLLLPQTSIEEDIEEDPREDLVGRLIEYQNYKEYTEILNTMKEERDLYFTKHPTDLTHLETNESWDPNQTIDLTELIVAYQRVKNRVELNTPKSVEIKKETFTIQQATAQVTERLKQHESFNFFSLFTFHEPVEQVVTHFLAILEMSKSGIVNIKQTKQFDDIDIIRGVNYSIG.

Belongs to the ScpA family. In terms of assembly, component of a cohesin-like complex composed of ScpA, ScpB and the Smc homodimer, in which ScpA and ScpB bind to the head domain of Smc. The presence of the three proteins is required for the association of the complex with DNA.

It is found in the cytoplasm. In terms of biological role, participates in chromosomal partition during cell division. May act via the formation of a condensin-like complex containing Smc and ScpB that pull DNA away from mid-cell into both cell halves. This chain is Segregation and condensation protein A, found in Staphylococcus epidermidis (strain ATCC 35984 / DSM 28319 / BCRC 17069 / CCUG 31568 / BM 3577 / RP62A).